Here is a 137-residue protein sequence, read N- to C-terminus: Holo-[acyl-carrier-protein] synthase (137 aa).

2 residues coordinate Mg(2+): aspartate 8 and glutamate 57.

This sequence belongs to the P-Pant transferase superfamily. AcpS family. Mg(2+) is required as a cofactor.

It is found in the cytoplasm. The enzyme catalyses apo-[ACP] + CoA = holo-[ACP] + adenosine 3',5'-bisphosphate + H(+). Its function is as follows. Transfers the 4'-phosphopantetheine moiety from coenzyme A to a Ser of acyl-carrier-protein. The polypeptide is Holo-[acyl-carrier-protein] synthase (Hyphomonas neptunium (strain ATCC 15444)).